The chain runs to 298 residues: Pyruvate synthase subunit PorB (298 aa).

The [4Fe-4S] cluster site is built by Cys-19, Cys-22, Cys-47, and Cys-218.

In terms of assembly, heterotetramer of one alpha, one beta, one delta and one gamma chain. [4Fe-4S] cluster is required as a cofactor.

It catalyses the reaction 2 oxidized [2Fe-2S]-[ferredoxin] + pyruvate + CoA = 2 reduced [2Fe-2S]-[ferredoxin] + acetyl-CoA + CO2 + H(+). In Methanocaldococcus jannaschii (strain ATCC 43067 / DSM 2661 / JAL-1 / JCM 10045 / NBRC 100440) (Methanococcus jannaschii), this protein is Pyruvate synthase subunit PorB (porB).